The sequence spans 490 residues: Bifunctional protein HldE (490 aa).

Residues 1–330 (MLDFEQLSPA…RKILPHAFLA (330 aa)) are ribokinase. 205–208 (NRKE) serves as a coordination point for ATP. D275 is an active-site residue. Positions 358–490 (FTNGCFDILH…LVARAQNGKS (133 aa)) are cytidylyltransferase.

The protein in the N-terminal section; belongs to the carbohydrate kinase PfkB family. It in the C-terminal section; belongs to the cytidylyltransferase family. In terms of assembly, homodimer.

It carries out the reaction D-glycero-beta-D-manno-heptose 7-phosphate + ATP = D-glycero-beta-D-manno-heptose 1,7-bisphosphate + ADP + H(+). It catalyses the reaction D-glycero-beta-D-manno-heptose 1-phosphate + ATP + H(+) = ADP-D-glycero-beta-D-manno-heptose + diphosphate. The protein operates within nucleotide-sugar biosynthesis; ADP-L-glycero-beta-D-manno-heptose biosynthesis; ADP-L-glycero-beta-D-manno-heptose from D-glycero-beta-D-manno-heptose 7-phosphate: step 1/4. It participates in nucleotide-sugar biosynthesis; ADP-L-glycero-beta-D-manno-heptose biosynthesis; ADP-L-glycero-beta-D-manno-heptose from D-glycero-beta-D-manno-heptose 7-phosphate: step 3/4. Its function is as follows. Catalyzes the phosphorylation of D-glycero-D-manno-heptose 7-phosphate at the C-1 position to selectively form D-glycero-beta-D-manno-heptose-1,7-bisphosphate. In terms of biological role, catalyzes the ADP transfer from ATP to D-glycero-beta-D-manno-heptose 1-phosphate, yielding ADP-D-glycero-beta-D-manno-heptose. In Rhodopseudomonas palustris (strain BisA53), this protein is Bifunctional protein HldE.